The primary structure comprises 160 residues: Cytochrome b6-f complex subunit 4 (160 aa).

A run of 3 helical transmembrane segments spans residues 36–56 (LLYMFPVCILGTIACNVGLAV), 95–115 (LLGVLLMASVPVGLITVPFIE), and 131–151 (TIFLIGTVVAVWLGIGATLPI).

It belongs to the cytochrome b family. PetD subfamily. As to quaternary structure, the 4 large subunits of the cytochrome b6-f complex are cytochrome b6, subunit IV (17 kDa polypeptide, petD), cytochrome f and the Rieske protein, while the 4 small subunits are petG, petL, petM and petN. The complex functions as a dimer.

It is found in the plastid. It localises to the chloroplast thylakoid membrane. Component of the cytochrome b6-f complex, which mediates electron transfer between photosystem II (PSII) and photosystem I (PSI), cyclic electron flow around PSI, and state transitions. This chain is Cytochrome b6-f complex subunit 4, found in Staurastrum punctulatum (Green alga).